Here is a 412-residue protein sequence, read N- to C-terminus: Dihydrolipoyllysine-residue acetyltransferase component of pyruvate dehydrogenase complex (412 aa).

A Lipoyl-binding domain is found at 2–78 (PIKILMPVLS…PVNSLIAVLS (77 aa)). Residue Lys43 is modified to N6-lipoyllysine. A Peripheral subunit-binding (PSBD) domain is found at 132–169 (FASPLAKRLAKMGNIRLESVKGSGPHGRIVKQDILSYT). His385 is a catalytic residue.

It belongs to the 2-oxoacid dehydrogenase family. Forms a 24-polypeptide structural core with octahedral symmetry. The cofactor is (R)-lipoate.

The enzyme catalyses N(6)-[(R)-dihydrolipoyl]-L-lysyl-[protein] + acetyl-CoA = N(6)-[(R)-S(8)-acetyldihydrolipoyl]-L-lysyl-[protein] + CoA. In terms of biological role, the pyruvate dehydrogenase complex catalyzes the overall conversion of pyruvate to acetyl-CoA and CO(2). It contains multiple copies of three enzymatic components: pyruvate dehydrogenase (E1), dihydrolipoamide acetyltransferase (E2) and lipoamide dehydrogenase (E3). The polypeptide is Dihydrolipoyllysine-residue acetyltransferase component of pyruvate dehydrogenase complex (pdhC) (Rickettsia felis (strain ATCC VR-1525 / URRWXCal2) (Rickettsia azadi)).